Here is a 449-residue protein sequence, read N- to C-terminus: Glucose-6-phosphate isomerase (449 aa).

Glu-291 serves as the catalytic Proton donor. Residues His-312 and Lys-426 contribute to the active site.

This sequence belongs to the GPI family.

It is found in the cytoplasm. The enzyme catalyses alpha-D-glucose 6-phosphate = beta-D-fructose 6-phosphate. It participates in carbohydrate biosynthesis; gluconeogenesis. The protein operates within carbohydrate degradation; glycolysis; D-glyceraldehyde 3-phosphate and glycerone phosphate from D-glucose: step 2/4. In terms of biological role, catalyzes the reversible isomerization of glucose-6-phosphate to fructose-6-phosphate. In Streptococcus pyogenes serotype M12 (strain MGAS2096), this protein is Glucose-6-phosphate isomerase.